The sequence spans 293 residues: Protease HtpX homolog (293 aa).

Transmembrane regions (helical) follow at residues 4 to 24 (IFLF…TMRI) and 38 to 58 (LTGL…ISLL). Position 146 (His146) interacts with Zn(2+). Residue Glu147 is part of the active site. Position 150 (His150) interacts with Zn(2+). 2 helical membrane passes run 161–181 (LIQG…GYFV) and 198–218 (ATVI…VAWF). Glu223 provides a ligand contact to Zn(2+).

This sequence belongs to the peptidase M48B family. The cofactor is Zn(2+).

It localises to the cell inner membrane. The protein is Protease HtpX homolog of Bordetella parapertussis (strain 12822 / ATCC BAA-587 / NCTC 13253).